Consider the following 443-residue polypeptide: Xaa-Pro dipeptidase (443 aa).

Residues D246, D257, H339, E384, and E423 each contribute to the Mn(2+) site.

The protein belongs to the peptidase M24B family. Bacterial-type prolidase subfamily. Requires Mn(2+) as cofactor.

It carries out the reaction Xaa-L-Pro dipeptide + H2O = an L-alpha-amino acid + L-proline. In terms of biological role, splits dipeptides with a prolyl residue in the C-terminal position. This Yersinia pseudotuberculosis serotype I (strain IP32953) protein is Xaa-Pro dipeptidase.